Here is a 355-residue protein sequence, read N- to C-terminus: Uroporphyrinogen decarboxylase (355 aa).

Residues 27 to 31 (RQAGR), Asp77, Tyr154, Thr209, and His328 contribute to the substrate site.

This sequence belongs to the uroporphyrinogen decarboxylase family. Homodimer.

It localises to the cytoplasm. The catalysed reaction is uroporphyrinogen III + 4 H(+) = coproporphyrinogen III + 4 CO2. It participates in porphyrin-containing compound metabolism; protoporphyrin-IX biosynthesis; coproporphyrinogen-III from 5-aminolevulinate: step 4/4. Catalyzes the decarboxylation of four acetate groups of uroporphyrinogen-III to yield coproporphyrinogen-III. In Colwellia psychrerythraea (strain 34H / ATCC BAA-681) (Vibrio psychroerythus), this protein is Uroporphyrinogen decarboxylase.